A 245-amino-acid polypeptide reads, in one-letter code: Uridylate kinase (245 aa).

Residue 15–18 participates in ATP binding; it reads KLSG. The segment at 23–28 is involved in allosteric activation by GTP; it reads GDEGFG. Position 57 (glycine 57) interacts with UMP. Glycine 58 and arginine 62 together coordinate ATP. UMP contacts are provided by residues aspartate 77 and 138–145; that span reads TGNPFCTT. Residues threonine 165, tyrosine 171, and aspartate 174 each contribute to the ATP site.

This sequence belongs to the UMP kinase family. In terms of assembly, homohexamer.

The protein resides in the cytoplasm. It catalyses the reaction UMP + ATP = UDP + ADP. Its pathway is pyrimidine metabolism; CTP biosynthesis via de novo pathway; UDP from UMP (UMPK route): step 1/1. With respect to regulation, allosterically activated by GTP. Inhibited by UTP. In terms of biological role, catalyzes the reversible phosphorylation of UMP to UDP. This chain is Uridylate kinase, found in Shewanella baltica (strain OS155 / ATCC BAA-1091).